The chain runs to 855 residues: MICAL-like protein 1 (855 aa).

Positions 2 to 108 constitute a Calponin-homology (CH) domain; that stretch reads AGPRGALLAW…YVSQYYNHFT (107 aa). Disordered stretches follow at residues 110 to 165, 226 to 253, and 269 to 659; these read SGQA…SSAC, GRSG…EDSD, and QASS…HGFP. Positions 124–135 are enriched in low complexity; the sequence is PAAPSPTSTSPA. The 64-residue stretch at 163–226 folds into the LIM zinc-binding domain; it reads SACAACGQRV…ERCTRLGLGG (64 aa). The segment covering 269–278 has biased composition (polar residues); sequence QASSEVQPHT. 2 positions are modified to phosphoserine: S293 and S307. Positions 308–325 are enriched in polar residues; it reads ESSALTPPTPRPRSSLQQ. T313 and T316 each carry phosphothreonine. The span at 356-367 shows a compositional bias: basic and acidic residues; it reads LSERMTAPRKDP. The NPF1 motif lies at 423-425; that stretch reads NPF. The span at 425–434 shows a compositional bias: acidic residues; the sequence is FEEEEEEEEA. Positions 439–449 are enriched in pro residues; sequence VPSPAPAPPET. 2 positions are modified to phosphothreonine: T461 and T463. Residues S464, S465, S478, and S480 each carry the phosphoserine modification. Residues 499-514 are compositionally biased toward low complexity; it reads PSPALSVESLSSESSS. Over residues 542 to 554 the composition is skewed to polar residues; sequence PGTSANSVTPSAH. The segment covering 555 to 570 has biased composition (low complexity); sequence SSLSSSGELGQPSGEQ. Phosphoserine is present on S613. Residues 625 to 627 carry the NPF2 motif; the sequence is NPF. Positions 644–855 are mediates the interaction with RAB13 and intramolecular interaction with the calponin-homology (CH) domain; sequence KGAKPVRPPA…AKSKAPTGKS (212 aa). The bMERB domain maps to 663-810; sequence RKVQADQYIP…EEEEDKMLET (148 aa). Residues 679-703 are a coiled coil; it reads EMDSIERQLDALEHSGVLLEEKLRG. Phosphoserine occurs at positions 682 and 732. A necessary and sufficient to associate with tubular recycling endosome membranes, mediate phosphatidic acid-binding and membrane tubulation region spans residues 692 to 855; sequence HSGVLLEEKL…AKSKAPTGKS (164 aa). A coiled-coil region spans residues 794–822; that stretch reads LDEDRQREEEEDKMLETMIKKKDFQREAE. Over residues 815 to 826 the composition is skewed to basic and acidic residues; the sequence is KDFQREAESDSK. Residues 815-855 form a disordered region; the sequence is KDFQREAESDSKKKGKFKTMKVLKLLGNKRDAKSKAPTGKS.

As to quaternary structure, homooligomer. Interacts (via NPF1 motif) with EHD1 (via EH domain); the interaction is direct and probably recruits EHD1 to membranes. Interacts with EHD3 (via EH domain). Interacts with RAB35 (GTP-bound form); the interaction is direct and probably recruits MICALL1 to membranes. Interacts with ACAP2; the interaction is indirect through RAB35. Interacts with RAB8A (GTP-bound form); regulates RAB8A association with recycling endosomes. Interacts with RAB13 (GTP-bound form). Interacts with ARF6 (GTP-bound form). Interacts with PACSIN2 (via the SH3 domain). Interacts with DPYSL2.

Its subcellular location is the recycling endosome membrane. It localises to the late endosome membrane. The protein resides in the cell projection. The protein localises to the cilium membrane. It is found in the cytoplasm. Its subcellular location is the cytoskeleton. It localises to the microtubule organizing center. The protein resides in the centrosome. The protein localises to the centriole. Its function is as follows. Lipid-binding protein with higher affinity for phosphatidic acid, a lipid enriched in recycling endosome membranes. On endosome membranes, acts as a downstream effector of Rab proteins recruiting cytosolic proteins to regulate membrane tubulation. Involved in a late step of receptor-mediated endocytosis regulating for instance endocytosed-EGF receptor trafficking. Alternatively, regulates slow endocytic recycling of endocytosed proteins back to the plasma membrane. Also involved in cargo protein delivery to the plasma membrane. Plays a role in ciliogenesis coordination, recruits EHD1 to primary cilium where it is anchored to the centriole through interaction with tubulins. May indirectly play a role in neurite outgrowth. This chain is MICAL-like protein 1 (Micall1), found in Rattus norvegicus (Rat).